Reading from the N-terminus, the 370-residue chain is Anthranilate phosphoribosyltransferase (370 aa).

5-phospho-alpha-D-ribose 1-diphosphate is bound by residues Gly82, 85–86 (GD), Thr90, 92–95 (NVST), 110–118 (KHGNRAATS), and Ser122. Residue Gly82 participates in anthranilate binding. Ser94 is a Mg(2+) binding site. An anthranilate-binding site is contributed by Asn113. Residue Arg168 participates in anthranilate binding. Asp226 and Glu227 together coordinate Mg(2+).

Belongs to the anthranilate phosphoribosyltransferase family. Homodimer. Requires Mg(2+) as cofactor.

The catalysed reaction is N-(5-phospho-beta-D-ribosyl)anthranilate + diphosphate = 5-phospho-alpha-D-ribose 1-diphosphate + anthranilate. It participates in amino-acid biosynthesis; L-tryptophan biosynthesis; L-tryptophan from chorismate: step 2/5. In terms of biological role, catalyzes the transfer of the phosphoribosyl group of 5-phosphorylribose-1-pyrophosphate (PRPP) to anthranilate to yield N-(5'-phosphoribosyl)-anthranilate (PRA). This chain is Anthranilate phosphoribosyltransferase, found in Methanosarcina mazei (strain ATCC BAA-159 / DSM 3647 / Goe1 / Go1 / JCM 11833 / OCM 88) (Methanosarcina frisia).